The following is a 197-amino-acid chain: Holliday junction branch migration complex subunit RuvA (197 aa).

The tract at residues M1 to A64 is domain I. Residues T65–A142 are domain II. The flexible linker stretch occupies residues A143 to S153. The tract at residues S153–K197 is domain III.

Belongs to the RuvA family. As to quaternary structure, homotetramer. Forms an RuvA(8)-RuvB(12)-Holliday junction (HJ) complex. HJ DNA is sandwiched between 2 RuvA tetramers; dsDNA enters through RuvA and exits via RuvB. An RuvB hexamer assembles on each DNA strand where it exits the tetramer. Each RuvB hexamer is contacted by two RuvA subunits (via domain III) on 2 adjacent RuvB subunits; this complex drives branch migration. In the full resolvosome a probable DNA-RuvA(4)-RuvB(12)-RuvC(2) complex forms which resolves the HJ.

Its subcellular location is the cytoplasm. In terms of biological role, the RuvA-RuvB-RuvC complex processes Holliday junction (HJ) DNA during genetic recombination and DNA repair, while the RuvA-RuvB complex plays an important role in the rescue of blocked DNA replication forks via replication fork reversal (RFR). RuvA specifically binds to HJ cruciform DNA, conferring on it an open structure. The RuvB hexamer acts as an ATP-dependent pump, pulling dsDNA into and through the RuvAB complex. HJ branch migration allows RuvC to scan DNA until it finds its consensus sequence, where it cleaves and resolves the cruciform DNA. The chain is Holliday junction branch migration complex subunit RuvA from Nitrosospira multiformis (strain ATCC 25196 / NCIMB 11849 / C 71).